The primary structure comprises 291 residues: N-acetylmannosamine kinase (291 aa).

ATP contacts are provided by residues 5 to 12 and 132 to 139; these read AIDIGGTK and GVGGGVVC. The Zn(2+) site is built by His156, Cys166, Cys168, and Cys173.

This sequence belongs to the ROK (NagC/XylR) family. NanK subfamily. In terms of assembly, homodimer.

The catalysed reaction is an N-acyl-D-mannosamine + ATP = an N-acyl-D-mannosamine 6-phosphate + ADP + H(+). It participates in amino-sugar metabolism; N-acetylneuraminate degradation; D-fructose 6-phosphate from N-acetylneuraminate: step 2/5. Functionally, catalyzes the phosphorylation of N-acetylmannosamine (ManNAc) to ManNAc-6-P. The chain is N-acetylmannosamine kinase from Salmonella agona (strain SL483).